The chain runs to 283 residues: Isochorismatase domain-containing protein 1 (283 aa).

It belongs to the isochorismatase family.

The chain is Isochorismatase domain-containing protein 1 (isoc1) from Salmo salar (Atlantic salmon).